A 923-amino-acid chain; its full sequence is Probable ribosylation factor GTPase-activating protein cnt6 (923 aa).

Ser207 is modified (phosphoserine). Residues 444 to 455 are compositionally biased toward basic and acidic residues; that stretch reads TTRRDKGREMHR. The tract at residues 444-476 is disordered; that stretch reads TTRRDKGREMHRSQVIQTSGRPKSMAPPSPSPI. The region spanning 526–632 is the PH domain; the sequence is KIFKEGLLLV…WIEAICEAAK (107 aa). In terms of domain architecture, Arf-GAP spans 714–837; that stretch reads NIFIQMLRKT…AFIDFAGVDA (124 aa). The C4-type zinc finger occupies 730–754; that stretch reads CADCGSVKDVTWCSINIPVVLCIEC.

The protein resides in the cytoplasm. Its subcellular location is the cell tip. Functionally, GTPase-activating protein for the ADP ribosylation factor family. This chain is Probable ribosylation factor GTPase-activating protein cnt6 (cnt6), found in Schizosaccharomyces pombe (strain 972 / ATCC 24843) (Fission yeast).